Reading from the N-terminus, the 158-residue chain is Ribosomal RNA large subunit methyltransferase H (158 aa).

Residues Leu-76, Gly-107, and 126 to 131 (LSGLTM) each bind S-adenosyl-L-methionine.

Belongs to the RNA methyltransferase RlmH family. As to quaternary structure, homodimer.

It localises to the cytoplasm. It carries out the reaction pseudouridine(1915) in 23S rRNA + S-adenosyl-L-methionine = N(3)-methylpseudouridine(1915) in 23S rRNA + S-adenosyl-L-homocysteine + H(+). Its function is as follows. Specifically methylates the pseudouridine at position 1915 (m3Psi1915) in 23S rRNA. The protein is Ribosomal RNA large subunit methyltransferase H of Teredinibacter turnerae (strain ATCC 39867 / T7901).